A 215-amino-acid chain; its full sequence is 16S rRNA (adenine(1408)-N(1))-methyltransferase (215 aa).

S-adenosyl-L-methionine is bound by residues G32, D55, 87-88 (AE), 102-107 (LMPWGS), and 191-193 (TSW).

This sequence belongs to the methyltransferase superfamily. Kanamycin-apramycin resistance family.

The catalysed reaction is adenosine(1408) in 16S rRNA + S-adenosyl-L-methionine = N(1)-methyladenosine(1408) in 16S rRNA + S-adenosyl-L-homocysteine + H(+). Specifically methylates the N(1) position of adenine 1408 in 16S rRNA. Confers resistance to various aminoglycosides. This chain is 16S rRNA (adenine(1408)-N(1))-methyltransferase (kamB), found in Streptoalloteichus hindustanus.